We begin with the raw amino-acid sequence, 509 residues long: Cytochrome P450 monooxygenase hepC (509 aa).

The helical transmembrane segment at 5–25 (MIIPSFWTGTAIIGLVACAYV) threads the bilayer. Cys-454 provides a ligand contact to heme. An N-linked (GlcNAc...) asparagine glycan is attached at Asn-491.

It belongs to the cytochrome P450 family. Requires heme as cofactor.

Its subcellular location is the membrane. Its pathway is secondary metabolite biosynthesis. Its function is as follows. Cytochrome P450 monooxygenase; part of the gene cluster that mediates the biosynthesis of heptelidic acid (HA), a sesquiterpene lactone that acts as an inhibitor of glyceraldehyde-3-phosphatedehydrogenase (GAPDH) and a growth inhibitor of the salt-tolerant lactic acid bacteria in soy sauce brewing. The chain is Cytochrome P450 monooxygenase hepC from Aspergillus oryzae (strain ATCC 42149 / RIB 40) (Yellow koji mold).